Reading from the N-terminus, the 823-residue chain is Apoptosis-resistant E3 ubiquitin protein ligase 1 (823 aa).

The Filamin repeat unit spans residues 64 to 158 (WDWKDPYEVG…VAYSPYYKIF (95 aa)). Residues 315 to 345 (PPMHMSSSQRRPSTAIEEDDEDSPSECHTPE) are disordered. Residues 483–789 (SISDWSKNFE…THSTLPTAHT (307 aa)) form an interaction with SOCS2 region. The region spanning 483–823 (SISDWSKNFE…SEGCEGFGML (341 aa)) is the HECT domain. The active-site Glycyl thioester intermediate is Cys-790.

As to quaternary structure, interacts with SOCS2. Interacts (via HECT domain) with HTRA2, DIABLO/SMAC and SEPTIN4; in the cytoplasm following induction of apoptosis. Autoubiquitinated in vitro in the presence of E2 enzyme UBE2D1/UBCH5A. Detected in brain, testis, heart, liver, lung and kidney with very low levels in skeletal muscle and spleen.

It carries out the reaction S-ubiquitinyl-[E2 ubiquitin-conjugating enzyme]-L-cysteine + [acceptor protein]-L-lysine = [E2 ubiquitin-conjugating enzyme]-L-cysteine + N(6)-ubiquitinyl-[acceptor protein]-L-lysine.. The protein operates within protein modification; protein ubiquitination. Functionally, E3 ubiquitin-protein ligase that catalyzes 'Lys-11'- or 'Lys-33'-linked polyubiquitin chains, with some preference for 'Lys-33' linkages. E3 ubiquitin-protein ligases accept ubiquitin from an E2 ubiquitin-conjugating enzyme in the form of a thioester and then directly transfers the ubiquitin to targeted substrates. Ubiquitinates SEPTIN4, DIABLO/SMAC and HTRA2 in vitro. Modulates pulmonary inflammation by targeting SOCS2 for ubiquitination and subsequent degradation by the proteasome. The protein is Apoptosis-resistant E3 ubiquitin protein ligase 1 (Arel1) of Mus musculus (Mouse).